The primary structure comprises 90 residues: Putative membrane protein insertion efficiency factor (90 aa).

It belongs to the UPF0161 family.

The protein resides in the cell inner membrane. In terms of biological role, could be involved in insertion of integral membrane proteins into the membrane. The protein is Putative membrane protein insertion efficiency factor of Bordetella bronchiseptica (strain ATCC BAA-588 / NCTC 13252 / RB50) (Alcaligenes bronchisepticus).